Consider the following 423-residue polypeptide: AP-1 complex subunit mu-2 (423 aa).

The MHD domain maps to 168 to 421 (KNEVFIDVIE…ITQSGDYQLR (254 aa)).

Belongs to the adaptor complexes medium subunit family. In terms of assembly, adaptor protein complex 1 (AP-1) is a heterotetramer composed of two large adaptins (gamma-type subunit AP1G1 and beta-type subunit AP1B1), a medium adaptin (mu-type subunit AP1M1 or AP1M2) and a small adaptin (sigma-type subunit AP1S1 or AP1S2 or AP1S3). Interacts with P2X4. Post-translationally, phosphorylation of membrane-bound AP1M1/AP1M2 increases its affinity for sorting signals.

Its subcellular location is the cytoplasmic vesicle. The protein localises to the clathrin-coated vesicle membrane. The protein resides in the golgi apparatus. Subunit of clathrin-associated adaptor protein complex 1 that plays a role in protein sorting in the trans-Golgi network (TGN) and endosomes. The AP complexes mediate the recruitment of clathrin to membranes and the recognition of sorting signals within the cytosolic tails of transmembrane cargo molecules. In Bos taurus (Bovine), this protein is AP-1 complex subunit mu-2.